The following is a 372-amino-acid chain: Glutamate 5-kinase (372 aa).

Lysine 14 provides a ligand contact to ATP. The substrate site is built by serine 54, aspartate 141, and asparagine 153. Residues 173 to 174 (TD) and 215 to 221 (TGGMATK) contribute to the ATP site. The PUA domain maps to 280 to 358 (RGKLILDQGA…DDIESLLGYD (79 aa)).

Belongs to the glutamate 5-kinase family.

Its subcellular location is the cytoplasm. It catalyses the reaction L-glutamate + ATP = L-glutamyl 5-phosphate + ADP. It functions in the pathway amino-acid biosynthesis; L-proline biosynthesis; L-glutamate 5-semialdehyde from L-glutamate: step 1/2. Its function is as follows. Catalyzes the transfer of a phosphate group to glutamate to form L-glutamate 5-phosphate. The chain is Glutamate 5-kinase from Shewanella sediminis (strain HAW-EB3).